The chain runs to 384 residues: Succinyl-diaminopimelate desuccinylase (384 aa).

Residue His75 participates in Zn(2+) binding. The active site involves Asp77. Position 108 (Asp108) interacts with Zn(2+). Glu142 functions as the Proton acceptor in the catalytic mechanism. Zn(2+) is bound by residues Glu143, Glu171, and His357.

This sequence belongs to the peptidase M20A family. DapE subfamily. In terms of assembly, homodimer. Requires Zn(2+) as cofactor. The cofactor is Co(2+).

It carries out the reaction N-succinyl-(2S,6S)-2,6-diaminopimelate + H2O = (2S,6S)-2,6-diaminopimelate + succinate. Its pathway is amino-acid biosynthesis; L-lysine biosynthesis via DAP pathway; LL-2,6-diaminopimelate from (S)-tetrahydrodipicolinate (succinylase route): step 3/3. In terms of biological role, catalyzes the hydrolysis of N-succinyl-L,L-diaminopimelic acid (SDAP), forming succinate and LL-2,6-diaminopimelate (DAP), an intermediate involved in the bacterial biosynthesis of lysine and meso-diaminopimelic acid, an essential component of bacterial cell walls. The polypeptide is Succinyl-diaminopimelate desuccinylase (Shewanella oneidensis (strain ATCC 700550 / JCM 31522 / CIP 106686 / LMG 19005 / NCIMB 14063 / MR-1)).